We begin with the raw amino-acid sequence, 199 residues long: Putative pseudouridine methyltransferase (199 aa).

Residues Leu132 and Cys186 each coordinate S-adenosyl-L-methionine.

Belongs to the methyltransferase superfamily. TrmY family.

It is found in the cytoplasm. The chain is Putative pseudouridine methyltransferase from Vibrio parahaemolyticus serotype O3:K6 (strain RIMD 2210633).